The following is a 309-amino-acid chain: Pseudouridine-5'-phosphate glycosidase 2 (309 aa).

E26 functions as the Proton donor in the catalytic mechanism. The substrate site is built by K87 and V107. D139 serves as a coordination point for Mn(2+). 141–143 (SAD) contacts substrate. K160 acts as the Nucleophile in catalysis.

The protein belongs to the pseudouridine-5'-phosphate glycosidase family. As to quaternary structure, homotrimer. Mn(2+) serves as cofactor.

The catalysed reaction is D-ribose 5-phosphate + uracil = psi-UMP + H2O. Functionally, catalyzes the reversible cleavage of pseudouridine 5'-phosphate (PsiMP) to ribose 5-phosphate and uracil. Functions biologically in the cleavage direction, as part of a pseudouridine degradation pathway. The chain is Pseudouridine-5'-phosphate glycosidase 2 from Rhizobium johnstonii (strain DSM 114642 / LMG 32736 / 3841) (Rhizobium leguminosarum bv. viciae).